A 347-amino-acid polypeptide reads, in one-letter code: N-acetyl-gamma-glutamyl-phosphate reductase (347 aa).

Cysteine 151 is an active-site residue.

This sequence belongs to the NAGSA dehydrogenase family. Type 1 subfamily.

Its subcellular location is the cytoplasm. It catalyses the reaction N-acetyl-L-glutamate 5-semialdehyde + phosphate + NADP(+) = N-acetyl-L-glutamyl 5-phosphate + NADPH + H(+). Its pathway is amino-acid biosynthesis; L-arginine biosynthesis; N(2)-acetyl-L-ornithine from L-glutamate: step 3/4. Catalyzes the NADPH-dependent reduction of N-acetyl-5-glutamyl phosphate to yield N-acetyl-L-glutamate 5-semialdehyde. This chain is N-acetyl-gamma-glutamyl-phosphate reductase, found in Corynebacterium diphtheriae (strain ATCC 700971 / NCTC 13129 / Biotype gravis).